Here is a 269-residue protein sequence, read N- to C-terminus: GRF-interacting factor 10 (269 aa).

The tract at residues 1–71 (MTAEGEAKNP…GEKDDGACRD (71 aa)) is disordered. Residues 22–43 (QQAAPAPAPAQGEVAQEAAVQG) are compositionally biased toward low complexity. A compositionally biased stretch (basic and acidic residues) spans 47 to 69 (EQERDKADREVQGGAGEKDDGAC). Residues 113–148 (AFTAMQLQELEQQSRVYQYMAARVPVPTHLVFPVWK) form the QLQ domain. In terms of domain architecture, WRC spans 179 to 223 (EPEPGRCRRTDGKKWRCWRNTIPNEKYCERHMHRGRKRPVQVFLE). 2 short sequence motifs (bipartite nuclear localization signal) span residues 184–194 (RCRRTDGKKWR) and 212–216 (RGRKR). A disordered region spans residues 217–269 (PVQVFLEDDEPDSASGSKPAAPGKATEGAKKADDKSPSSKKLAVAAPAAVQST). Over residues 243–253 (EGAKKADDKSP) the composition is skewed to basic and acidic residues.

The protein belongs to the GRF family. Interacts with GIF1. Highly expressed in shoots. Expressed in developing leaves.

Its subcellular location is the nucleus. Functionally, involved in the regulation of cell proliferation in developing shoots and leaves. Does not possess transactivation activity. This chain is GRF-interacting factor 10, found in Zea mays (Maize).